We begin with the raw amino-acid sequence, 247 residues long: 14-3-3 protein gamma (247 aa).

N-acetylmethionine; in 14-3-3 protein gamma; alternate; partial is present on methionine 1. Valine 2 is modified (N-acetylvaline; in 14-3-3 protein gamma, N-terminally processed; partial). Valine 2 carries the N-acetylvaline; partial modification. The tract at residues 2–166 (VDREQLVQKA…AHEISKEHMQ (165 aa)) is required for interaction with SPATA18/MIEAP (isoform 2) but dispensable for binding to SPATA18/MIEAP (isoform 1). Residues 2–247 (VDREQLVQKA…QDDDGGEGNN (246 aa)) form an interaction with SPATA18/MIEAP region. Phosphoserine is present on serine 71. Tyrosine 133 is modified (phosphotyrosine). Threonine 145 carries the phosphothreonine modification. Serine 215 carries the phosphoserine modification. At threonine 234 the chain carries Phosphothreonine. Position 235 is a phosphoserine (serine 235).

This sequence belongs to the 14-3-3 family. Homodimer. Part of a complex that contains DSG3, PKP1, YAP1 and YWHAG; the complex is required for localization of DSG3 and YAP1 to the cell membrane in keratinocytes. Interacts with SAMSN1. Interacts with RAF1, SSH1 and CRTC2/TORC2. Interacts with ABL1 (phosphorylated form); the interaction retains it in the cytoplasm. Interacts with GAB2. Interacts with MDM4 (phosphorylated); negatively regulates MDM4 activity toward TP53. Interacts with PKA-phosphorylated AANAT and SIRT2. Interacts with the 'Thr-369' phosphorylated form of DAPK2. Interacts with PI4KB, TBC1D22A and TBC1D22B. Interacts with SLITRK1. Interacts with LRRK2; this interaction is dependent on LRRK2 phosphorylation. Interacts with MARK2 and MARK3. Interacts with MEFV. Interacts with ENDOG, TSC2 and PIK3C3; interaction with ENDOG weakens its interaction with TSC2 and PIK3C3. Interacts with (phosphorylated) WDR24. Interacts with BEST1; this interaction promotes L-glutamate channel activity leading to the positive regulation of NMDA glutamate receptor activity through the L-glutamate secretion. Interacts with PKP1 (when phosphorylated); the interaction results in translocation of PKP1 to the cytoplasm and loss of intercellular adhesion in keratinocytes. Interacts with SPATA18/MIEAP (isoforms 1 and 2); a protein that also plays a role in MALM. In terms of processing, phosphorylated by various PKC isozymes. As to expression, highly expressed in brain, skeletal muscle, and heart.

The protein localises to the cytoplasm. Its subcellular location is the cytosol. The protein resides in the mitochondrion matrix. Functionally, adapter protein implicated in the regulation of a large spectrum of both general and specialized signaling pathways. Binds to a large number of partners, usually by recognition of a phosphoserine or phosphothreonine motif. Binding generally results in the modulation of the activity of the binding partner. Promotes inactivation of WDR24 component of the GATOR2 complex by binding to phosphorylated WDR24. Participates in the positive regulation of NMDA glutamate receptor activity by promoting the L-glutamate secretion through interaction with BEST1. Reduces keratinocyte intercellular adhesion, via interacting with PKP1 and sequestering it in the cytoplasm, thereby reducing its incorporation into desmosomes. Plays a role in mitochondrial protein catabolic process (also named MALM) that promotes the degradation of damaged proteins inside mitochondria. This chain is 14-3-3 protein gamma, found in Homo sapiens (Human).